The following is a 173-amino-acid chain: Translationally-controlled tumor protein homolog (173 aa).

The 173-residue stretch at 1–173 (MIIYKDILTG…WKHGLEEYKV (173 aa)) folds into the TCTP domain.

The protein belongs to the TCTP family.

It is found in the cytoplasm. The protein resides in the cytoskeleton. Its function is as follows. Involved in protein synthesis. Involved in microtubule stabilization. The protein is Translationally-controlled tumor protein homolog of Aspergillus oryzae (strain ATCC 42149 / RIB 40) (Yellow koji mold).